Here is a 424-residue protein sequence, read N- to C-terminus: Serine hydroxymethyltransferase 2 (424 aa).

Residues L125 and 129-131 (GHL) each bind (6S)-5,6,7,8-tetrahydrofolate. Position 234 is an N6-(pyridoxal phosphate)lysine (K234). E250 provides a ligand contact to (6S)-5,6,7,8-tetrahydrofolate.

This sequence belongs to the SHMT family. In terms of assembly, homodimer. Pyridoxal 5'-phosphate is required as a cofactor.

The protein localises to the cytoplasm. The enzyme catalyses (6R)-5,10-methylene-5,6,7,8-tetrahydrofolate + glycine + H2O = (6S)-5,6,7,8-tetrahydrofolate + L-serine. The protein operates within one-carbon metabolism; tetrahydrofolate interconversion. It participates in amino-acid biosynthesis; glycine biosynthesis; glycine from L-serine: step 1/1. In terms of biological role, catalyzes the reversible interconversion of serine and glycine with tetrahydrofolate (THF) serving as the one-carbon carrier. This reaction serves as the major source of one-carbon groups required for the biosynthesis of purines, thymidylate, methionine, and other important biomolecules. Also exhibits THF-independent aldolase activity toward beta-hydroxyamino acids, producing glycine and aldehydes, via a retro-aldol mechanism. The sequence is that of Serine hydroxymethyltransferase 2 from Cupriavidus pinatubonensis (strain JMP 134 / LMG 1197) (Cupriavidus necator (strain JMP 134)).